We begin with the raw amino-acid sequence, 875 residues long: Probable ATP-dependent RNA helicase DDX10 (875 aa).

The tract at residues 1-43 is disordered; the sequence is MGKTANSPGSGARPDPVRSFNRWKKKHSHRQNKKKQLRKQLKK. Phosphothreonine is present on threonine 4. Residue serine 7 is modified to Phosphoserine. The segment covering 21–41 has biased composition (basic residues); that stretch reads NRWKKKHSHRQNKKKQLRKQL. The Q motif motif lies at 69–97; that stretch reads TRFSDFPLSKKTLKGLQEAQYRLVTEIQK. ATP contacts are provided by residues 89–91, glutamine 96, and 113–120; these read YRL and AKTGSGKT. Residues 100 to 274 form the Helicase ATP-binding domain; that stretch reads IGLALQGKDV…RLSLKNPEYV (175 aa). The short motif at 222–225 is the DEAD box element; the sequence is DEAD. One can recognise a Helicase C-terminal domain in the interval 287–448; sequence TLEQNYIVCE…EIKINPEKLI (162 aa). The residue at position 539 (serine 539) is a Phosphoserine. Lysine 555 bears the N6-acetyllysine mark. The segment at 562–631 is disordered; that stretch reads GGKRLEGTEH…QFLDRDEEEE (70 aa). Positions 564–575 are enriched in basic and acidic residues; the sequence is KRLEGTEHRQDN. Position 577 is a phosphothreonine (threonine 577). Residues 577-593 are compositionally biased toward acidic residues; the sequence is TGNEEQEEEEDDEEEME. A compositionally biased stretch (polar residues) spans 603–613; it reads QAPSLPNTSEA. Lysine 649 is covalently cross-linked (Glycyl lysine isopeptide (Lys-Gly) (interchain with G-Cter in SUMO2)). A disordered region spans residues 703–850; the sequence is MQKSAIKDAE…HNRKKARWDT (148 aa). Basic and acidic residues predominate over residues 727 to 741; sequence ERLQEEDKFDKEEYR. Basic residues predominate over residues 742-751; that stretch reads KKIKAKHREK. Basic and acidic residues predominate over residues 752–771; that stretch reads RLKEREARREANKRQAKAKD. Residues 772 to 790 are compositionally biased toward acidic residues; the sequence is EEEAFLDWSDDDDDDDDGF. Serine 780 carries the post-translational modification Phosphoserine. Basic and acidic residues predominate over residues 812–821; it reads MENKISDTKK. A Phosphoserine modification is found at serine 831.

This sequence belongs to the DEAD box helicase family. DDX10/DBP4 subfamily. As to quaternary structure, interacts with AIM2; this interaction promotes AIM2 stability. Interacts with SCNA; this interaction causes DDX10 mislocalization to the nucleoplasm and cytoplasmic inclusions. In terms of tissue distribution, high in testis but widely expressed.

Its subcellular location is the cytoplasm. It is found in the nucleus. The protein localises to the nucleolus. It catalyses the reaction ATP + H2O = ADP + phosphate + H(+). Its function is as follows. Putative ATP-dependent RNA helicase that plays various role in innate immunity or inflammation. Plays a role in the enhancement of AIM2-induced inflammasome activation by interacting with AIM2 and stabilizing its protein level. Negatively regulates viral infection by promoting interferon beta production and interferon stimulated genes/ISGs expression. The protein is Probable ATP-dependent RNA helicase DDX10 (DDX10) of Homo sapiens (Human).